The following is a 687-amino-acid chain: uncharacterized protein (687 aa).

The segment covering S277–S295 has biased composition (low complexity). 3 disordered regions span residues S277 to D337, D342 to P361, and H531 to I564. Over residues N300–T313 the composition is skewed to polar residues.

This is an uncharacterized protein from Caenorhabditis elegans.